The chain runs to 471 residues: 3-isopropylmalate dehydratase large subunit (471 aa).

Residues C347, C407, and C410 each coordinate [4Fe-4S] cluster.

It belongs to the aconitase/IPM isomerase family. LeuC type 1 subfamily. In terms of assembly, heterodimer of LeuC and LeuD. Requires [4Fe-4S] cluster as cofactor.

The catalysed reaction is (2R,3S)-3-isopropylmalate = (2S)-2-isopropylmalate. The protein operates within amino-acid biosynthesis; L-leucine biosynthesis; L-leucine from 3-methyl-2-oxobutanoate: step 2/4. Functionally, catalyzes the isomerization between 2-isopropylmalate and 3-isopropylmalate, via the formation of 2-isopropylmaleate. The protein is 3-isopropylmalate dehydratase large subunit of Vibrio parahaemolyticus serotype O3:K6 (strain RIMD 2210633).